A 172-amino-acid polypeptide reads, in one-letter code: C-phycocyanin beta subunit (172 aa).

N72 is subject to N4-methylasparagine. Positions 82 and 153 each coordinate (2R,3E)-phycocyanobilin.

The protein belongs to the phycobiliprotein family. Heterodimer of an alpha and a beta subunit, which further assembles into trimers and the trimers into hexamers. In terms of processing, contains two covalently linked bilin chromophores.

The protein localises to the cellular thylakoid membrane. Light-harvesting photosynthetic bile pigment-protein from the phycobiliprotein complex (phycobilisome, PBS). Phycocyanin is the major phycobiliprotein in the PBS rod. The protein is C-phycocyanin beta subunit (cpcB) of Synechocystis sp. (strain PCC 6701).